The primary structure comprises 293 residues: Elongation factor Ts (293 aa).

The segment at 80–83 (TDFV) is involved in Mg(2+) ion dislocation from EF-Tu.

This sequence belongs to the EF-Ts family.

It is found in the cytoplasm. Its function is as follows. Associates with the EF-Tu.GDP complex and induces the exchange of GDP to GTP. It remains bound to the aminoacyl-tRNA.EF-Tu.GTP complex up to the GTP hydrolysis stage on the ribosome. The sequence is that of Elongation factor Ts from Aeromonas hydrophila subsp. hydrophila (strain ATCC 7966 / DSM 30187 / BCRC 13018 / CCUG 14551 / JCM 1027 / KCTC 2358 / NCIMB 9240 / NCTC 8049).